The chain runs to 987 residues: Mitotic checkpoint serine/threonine-protein kinase bub-1 (987 aa).

Disordered regions lie at residues 278–385 and 574–599; these read RRRH…TSKS and LAANQAVQPSVTESSKPERSDPKDSS. Basic and acidic residues predominate over residues 350–364; that stretch reads ERLKIMTAGRKDGNP. A compositionally biased stretch (low complexity) spans 368–380; sequence STSISSNYSTASA. Over residues 575–587 the composition is skewed to polar residues; sequence AANQAVQPSVTES. The segment covering 588–599 has biased composition (basic and acidic residues); the sequence is SKPERSDPKDSS. Positions 690-987 constitute a Protein kinase domain; the sequence is LHIQTLIGQG…EACDLAANQK (298 aa). ATP contacts are provided by residues 696–704 and K718; that span reads IGQGGYAKV. The active-site Proton acceptor is D814.

Belongs to the protein kinase superfamily. Ser/Thr protein kinase family. BUB1 subfamily. In terms of assembly, interacts (via kinase domain) with mdf-1 (via coiled coil domain); the interaction recruits mdf-1 to unattached kinetochores during mitosis and between homologous chromosomes in early anaphase of meiosis I. May interact with bub-3; for localization at the kinetochore and the onset of anaphase.

Its subcellular location is the cytoplasm. The protein resides in the cell cortex. The protein localises to the nucleus. It is found in the chromosome. It localises to the centromere. Its subcellular location is the kinetochore. It catalyses the reaction L-seryl-[protein] + ATP = O-phospho-L-seryl-[protein] + ADP + H(+). It carries out the reaction L-threonyl-[protein] + ATP = O-phospho-L-threonyl-[protein] + ADP + H(+). Its function is as follows. Serine/threonine-protein kinase essential for spindle-assembly checkpoint signaling. Plays a key role in the recruitment of the checkpoint proteins bub-3, mdf-1 and mdf-2 to unattached kinetochores. mdf-1 recruitment is independent of bub-1 kinase activity. Has a role in the correct kinetochore localization of the spindly-like protein spdl-1. In addition, during meiotic anaphase I, controls the recruitment of hcp-1/2 and klp-19 to the ring-shaped domain formed between chromosomes. Involved in chromosome alignment, chromosome homolog segregation and spindle assembly. In association with bub-3 at the kinetochore region of chromosomes, promotes the onset on anaphase independently from spindle checkpoint signaling and promotes the formation of stable end-on bipolar attachments of chromosomes. Plays a role in nuclear envelope breakdown. Required maternally during embryogenesis and in the zygote for the postembryonic development of several tissues including ventral cord neurons, gonad, intestine and seam cells. The chain is Mitotic checkpoint serine/threonine-protein kinase bub-1 from Caenorhabditis elegans.